The following is a 361-amino-acid chain: Chorismate synthase (361 aa).

NADP(+) is bound at residue R47. FMN contacts are provided by residues 124 to 126, G286, 301 to 305, and R327; these read RAS and KPTAT.

Belongs to the chorismate synthase family. As to quaternary structure, homotetramer. The cofactor is FMNH2.

The catalysed reaction is 5-O-(1-carboxyvinyl)-3-phosphoshikimate = chorismate + phosphate. Its pathway is metabolic intermediate biosynthesis; chorismate biosynthesis; chorismate from D-erythrose 4-phosphate and phosphoenolpyruvate: step 7/7. Functionally, catalyzes the anti-1,4-elimination of the C-3 phosphate and the C-6 proR hydrogen from 5-enolpyruvylshikimate-3-phosphate (EPSP) to yield chorismate, which is the branch point compound that serves as the starting substrate for the three terminal pathways of aromatic amino acid biosynthesis. This reaction introduces a second double bond into the aromatic ring system. The protein is Chorismate synthase of Prochlorococcus marinus (strain NATL1A).